The primary structure comprises 460 residues: Argininosuccinate lyase (460 aa).

Belongs to the lyase 1 family. Argininosuccinate lyase subfamily.

It localises to the cytoplasm. The catalysed reaction is 2-(N(omega)-L-arginino)succinate = fumarate + L-arginine. Its pathway is amino-acid biosynthesis; L-arginine biosynthesis; L-arginine from L-ornithine and carbamoyl phosphate: step 3/3. The chain is Argininosuccinate lyase from Lawsonia intracellularis (strain PHE/MN1-00).